The chain runs to 443 residues: tRNA-2-methylthio-N(6)-dimethylallyladenosine synthase (443 aa).

The region spanning 3 to 120 is the MTTase N-terminal domain; sequence SKLYIKTFGC…LPELIDARRR (118 aa). [4Fe-4S] cluster is bound by residues C12, C49, C83, C157, C161, and C164. The region spanning 143–377 is the Radical SAM core domain; sequence RTTGATAFVS…KIQRNAQMIS (235 aa). Residues 378–441 enclose the TRAM domain; it reads QSMVDTIQRV…SHTLRGEISD (64 aa).

Belongs to the methylthiotransferase family. MiaB subfamily. Monomer. The cofactor is [4Fe-4S] cluster.

The protein localises to the cytoplasm. The enzyme catalyses N(6)-dimethylallyladenosine(37) in tRNA + (sulfur carrier)-SH + AH2 + 2 S-adenosyl-L-methionine = 2-methylsulfanyl-N(6)-dimethylallyladenosine(37) in tRNA + (sulfur carrier)-H + 5'-deoxyadenosine + L-methionine + A + S-adenosyl-L-homocysteine + 2 H(+). In terms of biological role, catalyzes the methylthiolation of N6-(dimethylallyl)adenosine (i(6)A), leading to the formation of 2-methylthio-N6-(dimethylallyl)adenosine (ms(2)i(6)A) at position 37 in tRNAs that read codons beginning with uridine. The protein is tRNA-2-methylthio-N(6)-dimethylallyladenosine synthase of Nitrosomonas eutropha (strain DSM 101675 / C91 / Nm57).